A 641-amino-acid polypeptide reads, in one-letter code: ATP-dependent zinc metalloprotease FtsH (641 aa).

Residues 1 to 16 (MNKQQKPKRSPLRPDY) lie on the Cytoplasmic side of the membrane. A helical membrane pass occupies residues 17–37 (LVIVIIILLAIGMYFFFTEMM). The Extracellular portion of the chain corresponds to 38-131 (APKVKQFDEF…VSFVPHVSVD (94 aa)). A helical transmembrane segment spans residues 132-152 (FWNIISTLLLIAAPIVLVVIM). At 153-641 (FRSMSSQSNK…EVEEDSKKSE (489 aa)) the chain is on the cytoplasmic side. 222 to 229 (GQPGTGKT) is an ATP binding site. Histidine 444 contributes to the Zn(2+) binding site. Glutamate 445 is a catalytic residue. Histidine 448 and aspartate 520 together coordinate Zn(2+).

It in the central section; belongs to the AAA ATPase family. This sequence in the C-terminal section; belongs to the peptidase M41 family. In terms of assembly, homohexamer. Zn(2+) is required as a cofactor.

It is found in the cell membrane. Acts as a processive, ATP-dependent zinc metallopeptidase for both cytoplasmic and membrane proteins. Plays a role in the quality control of integral membrane proteins. In Acholeplasma laidlawii (strain PG-8A), this protein is ATP-dependent zinc metalloprotease FtsH.